The chain runs to 650 residues: Growth hormone receptor (650 aa).

The N-terminal stretch at 1-24 (MDLCQVFLTLALAVTSSTFSGSEA) is a signal peptide. The Extracellular portion of the chain corresponds to 25-273 (TPATLGKASP…ILEACEEDIQ (249 aa)). Disulfide bonds link cysteine 56/cysteine 66 and cysteine 109/cysteine 120. Asparagine 123 is a glycosylation site (N-linked (GlcNAc...) asparagine). An intrachain disulfide couples cysteine 134 to cysteine 148. Residues 159–262 (PPIGLNWTLL…EVLRVIFPQT (104 aa)) enclose the Fibronectin type-III domain. Asparagine 164, asparagine 169, and asparagine 208 each carry an N-linked (GlcNAc...) asparagine glycan. Positions 248-252 (YSEFS) match the WSXWS motif motif. The chain crosses the membrane as a helical span at residues 274–297 (FPWFLIIIFGIFGVAVMLFVVIFS). The Cytoplasmic portion of the chain corresponds to 298–650 (KQQRIKMLIL…STDQLNKIMQ (353 aa)). The segment at 303–390 (KMLILPPVPV…HEKSAGILGA (88 aa)) is required for JAK2 binding. A Box 1 motif motif is present at residues 306-314 (ILPPVPVPK). Positions 349 to 358 (DSWVEFIELD) match the UbE motif motif. Residue serine 350 is modified to Phosphoserine. The disordered stretch occupies residues 466 to 486 (KPQPLLSSETEATHQLASTPM). The segment covering 470-486 (LLSSETEATHQLASTPM) has biased composition (polar residues). Tyrosine 498 and tyrosine 606 each carry phosphotyrosine.

Belongs to the type I cytokine receptor family. Type 1 subfamily. In terms of assembly, on growth hormone (GH) binding, forms homodimers and binds JAK2 via a box 1-containing domain. Post-translationally, the soluble form (GHBP) is produced by phorbol ester-promoted proteolytic cleavage at the cell surface (shedding) by ADAM17/TACE. Shedding is inhibited by growth hormone (GH) binding to the receptor probably due to a conformational change in GHR rendering the receptor inaccessible to ADAM17. In terms of processing, on GH binding, phosphorylated on tyrosine residues in the cytoplasmic domain by JAK2. Ubiquitinated by the ECS(SOCS2) complex following ligand-binding and phosphorylation by JAK2, leading to its degradation by the proteasome. Regulation by the ECS(SOCS2) complex acts as a negative feedback loop of growth hormone receptor signaling. Ubiquitination is not sufficient for GHR internalization. In terms of tissue distribution, expressed in all tissues tested including, liver, heart, adipose tissue, mammary gland, testes, ovary, brain, kidney and muscle. Highest levels in liver.

The protein localises to the cell membrane. It is found in the secreted. Functionally, receptor for pituitary gland growth hormone (GH1) involved in regulating postnatal body growth. On ligand binding, couples to the JAK2/STAT5 pathway. The soluble form (GHBP) acts as a reservoir of growth hormone in plasma and may be a modulator/inhibitor of GH signaling. This chain is Growth hormone receptor (Ghr), found in Mus musculus (Mouse).